Here is a 293-residue protein sequence, read N- to C-terminus: Elongation factor Ts (293 aa).

An involved in Mg(2+) ion dislocation from EF-Tu region spans residues 79–82 (TDFV).

It belongs to the EF-Ts family.

It localises to the cytoplasm. Associates with the EF-Tu.GDP complex and induces the exchange of GDP to GTP. It remains bound to the aminoacyl-tRNA.EF-Tu.GTP complex up to the GTP hydrolysis stage on the ribosome. The polypeptide is Elongation factor Ts (Macrococcus caseolyticus (strain JCSC5402) (Macrococcoides caseolyticum)).